The following is an 82-amino-acid chain: Acyl carrier protein (82 aa).

The 79-residue stretch at 3-81 (SSEQEILAGL…DAVTYIAGAQ (79 aa)) folds into the Carrier domain. Serine 41 carries the post-translational modification O-(pantetheine 4'-phosphoryl)serine.

Belongs to the acyl carrier protein (ACP) family. Post-translationally, 4'-phosphopantetheine is transferred from CoA to a specific serine of apo-ACP by AcpS. This modification is essential for activity because fatty acids are bound in thioester linkage to the sulfhydryl of the prosthetic group.

It localises to the cytoplasm. It functions in the pathway lipid metabolism; fatty acid biosynthesis. Carrier of the growing fatty acid chain in fatty acid biosynthesis. This chain is Acyl carrier protein, found in Beutenbergia cavernae (strain ATCC BAA-8 / DSM 12333 / CCUG 43141 / JCM 11478 / NBRC 16432 / NCIMB 13614 / HKI 0122).